The chain runs to 252 residues: 3-deoxy-manno-octulosonate cytidylyltransferase (252 aa).

The protein belongs to the KdsB family.

The protein resides in the cytoplasm. It carries out the reaction 3-deoxy-alpha-D-manno-oct-2-ulosonate + CTP = CMP-3-deoxy-beta-D-manno-octulosonate + diphosphate. It functions in the pathway nucleotide-sugar biosynthesis; CMP-3-deoxy-D-manno-octulosonate biosynthesis; CMP-3-deoxy-D-manno-octulosonate from 3-deoxy-D-manno-octulosonate and CTP: step 1/1. It participates in bacterial outer membrane biogenesis; lipopolysaccharide biosynthesis. Activates KDO (a required 8-carbon sugar) for incorporation into bacterial lipopolysaccharide in Gram-negative bacteria. The polypeptide is 3-deoxy-manno-octulosonate cytidylyltransferase (Vibrio campbellii (strain ATCC BAA-1116)).